The sequence spans 311 residues: Putative S-adenosyl-L-methionine-dependent methyltransferase MUL_4761 (311 aa).

S-adenosyl-L-methionine contacts are provided by residues D132 and 161–162; that span reads DL.

This sequence belongs to the UPF0677 family.

Its function is as follows. Exhibits S-adenosyl-L-methionine-dependent methyltransferase activity. The chain is Putative S-adenosyl-L-methionine-dependent methyltransferase MUL_4761 from Mycobacterium ulcerans (strain Agy99).